A 154-amino-acid polypeptide reads, in one-letter code: 17 kDa surface antigen (154 aa).

A signal peptide spans 1 to 19; that stretch reads MKLLSKIMIIALAASMLQA. A lipid anchor (N-palmitoyl cysteine) is attached at C20. Residue C20 is the site of S-diacylglycerol cysteine attachment.

The protein belongs to the rickettsiale 17 kDa surface antigen family.

The protein localises to the cell outer membrane. The polypeptide is 17 kDa surface antigen (omp) (Rickettsia australis).